The sequence spans 435 residues: Glutamyl-tRNA reductase (435 aa).

Substrate-binding positions include 49–52, S118, 123–125, and Q129; these read TCNR and EPQ. C50 (nucleophile) is an active-site residue. 203 to 208 is a binding site for NADP(+); the sequence is GAGETI.

Belongs to the glutamyl-tRNA reductase family. Homodimer.

The catalysed reaction is (S)-4-amino-5-oxopentanoate + tRNA(Glu) + NADP(+) = L-glutamyl-tRNA(Glu) + NADPH + H(+). The protein operates within porphyrin-containing compound metabolism; protoporphyrin-IX biosynthesis; 5-aminolevulinate from L-glutamyl-tRNA(Glu): step 1/2. Catalyzes the NADPH-dependent reduction of glutamyl-tRNA(Glu) to glutamate 1-semialdehyde (GSA). In Glaesserella parasuis serovar 5 (strain SH0165) (Haemophilus parasuis), this protein is Glutamyl-tRNA reductase.